The sequence spans 219 residues: Ribosome maturation factor RimP (219 aa).

2 disordered regions span residues 1–38 (MTQR…LATR) and 189–219 (VEFT…DEER). Positions 198 to 219 (DAFDGTDEAGDFDDDDVEDEER) are enriched in acidic residues.

Belongs to the RimP family.

Its subcellular location is the cytoplasm. Its function is as follows. Required for maturation of 30S ribosomal subunits. The protein is Ribosome maturation factor RimP of Salinispora arenicola (strain CNS-205).